The primary structure comprises 80 residues: Acyl carrier protein (80 aa).

The region spanning 2–77 (SEINQKVVDI…QVVEYLEKRL (76 aa)) is the Carrier domain. Ser37 is subject to O-(pantetheine 4'-phosphoryl)serine.

The protein belongs to the acyl carrier protein (ACP) family. In terms of processing, 4'-phosphopantetheine is transferred from CoA to a specific serine of apo-ACP by AcpS. This modification is essential for activity because fatty acids are bound in thioester linkage to the sulfhydryl of the prosthetic group.

It is found in the cytoplasm. It participates in lipid metabolism; fatty acid biosynthesis. Carrier of the growing fatty acid chain in fatty acid biosynthesis. In Amoebophilus asiaticus (strain 5a2), this protein is Acyl carrier protein.